A 1166-amino-acid polypeptide reads, in one-letter code: Topoisomerase 1-associated factor 1 (1166 aa).

Disordered stretches follow at residues 333-358, 564-594, 881-981, and 1023-1145; these read KMDE…NNDF, QVRS…ASDD, DPYT…RARL, and ALLT…DENA. Acidic residues predominate over residues 585–594; the sequence is DNNEEHASDD. Over residues 881–893 the composition is skewed to basic and acidic residues; it reads DPYTGDIEHDPRQ. The span at 916–926 shows a compositional bias: acidic residues; it reads FGSESEGEDVP. Over residues 966–981 the composition is skewed to basic and acidic residues; it reads LEARRKARQENTRARL. Over residues 1087–1107 the composition is skewed to acidic residues; it reads TEDDENTSATSDEDDEFDFDD. A compositionally biased stretch (basic and acidic residues) spans 1109–1142; that stretch reads LAFRRDRDLDRDPVLPSHAEDMQPTDTRELRDND.

Belongs to the timeless family.

It localises to the nucleus. Functionally, involved in chromosome segregation during meiosis and DNA damage repair. This Aspergillus oryzae (strain ATCC 42149 / RIB 40) (Yellow koji mold) protein is Topoisomerase 1-associated factor 1 (tof1).